The sequence spans 271 residues: RxLR effector protein PITG_15679 (271 aa).

Residues 1 to 18 form the signal peptide; that stretch reads MKVLQLIALTALVSSCVA. Residues 49–69 carry the RxLR-dEER motif; sequence RSLRRYDLEGLDSVNSNREER. The Nudix hydrolase domain occupies 212 to 271; it reads RLLSANVVMRLNDKGEKQILLISSSNPKKGDFLLPKGGWDKGEDVKKAALREVIEEGGVR. The Nudix box signature appears at 248–269; sequence GGWDKGEDVKKAALREVIEEGG.

In the N-terminal section; belongs to the RxLR effector family. This sequence in the C-terminal section; belongs to the Nudix hydrolase family.

It is found in the secreted. The protein resides in the host cytoplasm. The protein localises to the host nucleus. Functionally, effector that enhances P.infestans colonization of Nicotiana benthamiana leaves. In Phytophthora infestans (strain T30-4) (Potato late blight agent), this protein is RxLR effector protein PITG_15679.